Reading from the N-terminus, the 244-residue chain is HTH-type transcriptional regulator Cmr (244 aa).

Gly41–Arg160 lines the a nucleoside 3',5'-cyclic phosphate pocket. An HTH crp-type domain is found at Arg174 to His237. The H-T-H motif DNA-binding region spans Gln197–Lys216.

Its function is as follows. Positively regulates the expression of at least groEL2. The polypeptide is HTH-type transcriptional regulator Cmr (cmr) (Mycobacterium tuberculosis (strain CDC 1551 / Oshkosh)).